Reading from the N-terminus, the 218-residue chain is PKHD-type hydroxylase Sala_1910 (218 aa).

The Fe2OG dioxygenase domain maps to 74–172 (RIAPPLLTRY…RLVAITFIQS (99 aa)). Positions 92, 94, and 153 each coordinate Fe cation. Residue arginine 163 participates in 2-oxoglutarate binding.

Requires Fe(2+) as cofactor. L-ascorbate is required as a cofactor.

In Sphingopyxis alaskensis (strain DSM 13593 / LMG 18877 / RB2256) (Sphingomonas alaskensis), this protein is PKHD-type hydroxylase Sala_1910.